The sequence spans 105 residues: Integration host factor subunit alpha (105 aa).

This sequence belongs to the bacterial histone-like protein family. In terms of assembly, heterodimer of an alpha and a beta chain.

Functionally, this protein is one of the two subunits of integration host factor, a specific DNA-binding protein that functions in genetic recombination as well as in transcriptional and translational control. The chain is Integration host factor subunit alpha from Rhodospirillum rubrum (strain ATCC 11170 / ATH 1.1.1 / DSM 467 / LMG 4362 / NCIMB 8255 / S1).